We begin with the raw amino-acid sequence, 123 residues long: Ribosome-binding factor A (123 aa).

Belongs to the RbfA family. Monomer. Binds 30S ribosomal subunits, but not 50S ribosomal subunits or 70S ribosomes.

It localises to the cytoplasm. One of several proteins that assist in the late maturation steps of the functional core of the 30S ribosomal subunit. Associates with free 30S ribosomal subunits (but not with 30S subunits that are part of 70S ribosomes or polysomes). Required for efficient processing of 16S rRNA. May interact with the 5'-terminal helix region of 16S rRNA. The chain is Ribosome-binding factor A from Syntrophus aciditrophicus (strain SB).